The primary structure comprises 352 residues: Thymidine kinase (352 aa).

Residue 26 to 33 (GSMGIGKT) coordinates ATP. The active-site Proton acceptor is the glutamate 54. Glutamine 95 contacts substrate. Arginine 185 is a binding site for ATP. Arginine 191 contacts substrate.

It belongs to the herpesviridae thymidine kinase family. As to quaternary structure, homodimer.

The catalysed reaction is thymidine + ATP = dTMP + ADP + H(+). Functionally, catalyzes the transfer of the gamma-phospho group of ATP to thymidine to generate dTMP in the salvage pathway of pyrimidine synthesis. The dTMP serves as a substrate for DNA polymerase during viral DNA replication. Allows the virus to be reactivated and to grow in non-proliferative cells lacking a high concentration of phosphorylated nucleic acid precursors. In Gallus gallus (Chicken), this protein is Thymidine kinase.